A 553-amino-acid chain; its full sequence is CTP synthase (553 aa).

Positions 1-278 are amidoligase domain; the sequence is MVRRTHGNSQ…DAYVVRELGL (278 aa). Residue Ser25 coordinates CTP. Ser25 provides a ligand contact to UTP. ATP-binding positions include 26–31 and Asp83; that span reads SLGKGL. Asp83 and Glu152 together coordinate Mg(2+). Residues 159 to 161, 199 to 204, and Lys235 contribute to the CTP site; these read DIE and KTKPTQ. Residues 199 to 204 and Lys235 each bind UTP; that span reads KTKPTQ. The Glutamine amidotransferase type-1 domain maps to 303-552; it reads NIAIVGKYID…VKAALDHQAA (250 aa). Gly366 provides a ligand contact to L-glutamine. Residue Cys393 is the Nucleophile; for glutamine hydrolysis of the active site. L-glutamine-binding positions include 394 to 397, Glu417, and Arg478; that span reads LGLQ. Active-site residues include His525 and Glu527.

It belongs to the CTP synthase family. Homotetramer.

The enzyme catalyses UTP + L-glutamine + ATP + H2O = CTP + L-glutamate + ADP + phosphate + 2 H(+). The catalysed reaction is L-glutamine + H2O = L-glutamate + NH4(+). It carries out the reaction UTP + NH4(+) + ATP = CTP + ADP + phosphate + 2 H(+). The protein operates within pyrimidine metabolism; CTP biosynthesis via de novo pathway; CTP from UDP: step 2/2. Its activity is regulated as follows. Allosterically activated by GTP, when glutamine is the substrate; GTP has no effect on the reaction when ammonia is the substrate. The allosteric effector GTP functions by stabilizing the protein conformation that binds the tetrahedral intermediate(s) formed during glutamine hydrolysis. Inhibited by the product CTP, via allosteric rather than competitive inhibition. Catalyzes the ATP-dependent amination of UTP to CTP with either L-glutamine or ammonia as the source of nitrogen. Regulates intracellular CTP levels through interactions with the four ribonucleotide triphosphates. This is CTP synthase from Bifidobacterium longum (strain NCC 2705).